Reading from the N-terminus, the 809-residue chain is Protein TOC75, chloroplastic (809 aa).

A compositionally biased stretch (polar residues) spans 1–17; the sequence is MRTSVIPNRLTPTLTTH. The transit peptide at 1–35 directs the protein to the chloroplast; it reads MRTSVIPNRLTPTLTTHPSRRRNDHITTRTSSLKC. Positions 1-44 are disordered; the sequence is MRTSVIPNRLTPTLTTHPSRRRNDHITTRTSSLKCHLSPSSGDN. Residues 36–131 constitute a chloroplast; outer membrane transit peptide; it reads HLSPSSGDNN…RILSPARAIA (96 aa). Over 132–143 the chain is Chloroplast intermembrane; the sequence is DEPKSEDWDSHE. The beta stranded transmembrane segment at 144 to 152 threads the bilayer; sequence LPADITVLL. Residues 153-160 lie on the Cytoplasmic side of the membrane; sequence GRLSGFKK. The chain crosses the membrane as a beta stranded span at residues 161-169; sequence YKISDILFF. Residues 170-225 are Chloroplast intermembrane-facing; sequence DRNKKSKVETQDSFLDMVSLKPGGVYTKAQLQKELESLATCGMFEKVDMEGKTNAD. A beta stranded membrane pass occupies residues 226–234; that stretch reads GSLGLTISF. Topologically, residues 235 to 247 are cytoplasmic; the sequence is AESMWERADRFRC. Residues 248 to 254 form a beta stranded membrane-spanning segment; sequence INVGLMG. At 255-357 the chain is on the chloroplast intermembrane side; sequence QSKPVEMDPD…VVCEVVEGDI (103 aa). The beta stranded transmembrane segment at 358-365 threads the bilayer; that stretch reads TKLSIQYL. Residues 366–410 lie on the Cytoplasmic side of the membrane; the sequence is DKLGNVVEGNTEGPVVQRELPKQLLPGHTFNIEAGKQALRNINSL. A beta stranded transmembrane segment spans residues 411–418; that stretch reads ALFSNIEV. Residues 419 to 427 are Chloroplast intermembrane-facing; sequence NPRPDEMNE. The chain crosses the membrane as a beta stranded span at residues 428-436; that stretch reads GSIIVEIKL. Over 437–442 the chain is Cytoplasmic; it reads KELEQK. A beta stranded membrane pass occupies residues 443-452; it reads SAEVSTEWSI. The Chloroplast intermembrane segment spans residues 453-464; the sequence is VPGRGGRPTLAS. The beta stranded transmembrane segment at 465–473 threads the bilayer; the sequence is LQPGGTITF. Topologically, residues 474–500 are cytoplasmic; sequence EHRNLQGLNRSLTGSVTTSNFLNPQDD. Residues 501–509 traverse the membrane as a beta stranded segment; that stretch reads LAFKMEYAH. Topologically, residues 510 to 553 are chloroplast intermembrane; sequence PYLDGVDNPRNRTLRVSCFNSRKLSPVFTGGPGVDEVPSIWVDR. Residues 554 to 561 traverse the membrane as a beta stranded segment; it reads AGVKANIT. Residues 562–569 lie on the Cytoplasmic side of the membrane; sequence ENFSRQSK. Residues 570 to 577 form a beta stranded membrane-spanning segment; sequence FTYGLVME. The Chloroplast intermembrane portion of the chain corresponds to 578 to 684; the sequence is EIITRDESNH…VEEGAGKSPP (107 aa). Residues 685 to 693 traverse the membrane as a beta stranded segment; sequence PVLVLHGHY. Over 694 to 705 the chain is Cytoplasmic; it reads GGCVGDLPSYDA. The chain crosses the membrane as a beta stranded span at residues 706–714; it reads FTLGGPYSV. The Chloroplast intermembrane portion of the chain corresponds to 715 to 776; the sequence is RGYNMGEIGA…VYRRMGQGSS (62 aa). The chain crosses the membrane as a beta stranded span at residues 777-783; it reads YGAGMKL. Topologically, residues 784 to 797 are cytoplasmic; sequence GLVRAEYAVDHNSG. A beta stranded membrane pass occupies residues 798–805; sequence TGAVFFRF. The Chloroplast intermembrane segment spans residues 806-809; the sequence is GERF.

The protein belongs to the TOC75 family. In terms of assembly, part of the TOC core complex that includes a protein for the specific recognition of transit peptides surrounded by a ring composed of four proteins forming translocation channels, and four to five GTP-binding proteins providing energy. This core complex can interact with components of the TIC complex to form a larger import complex. Chloroplastic protein precursors such as prSS (precursor of the RuBisCO small subunit) also interact with these complexes. TOC75 interacts with OEP14, TOC34/OEP34, TOC86/OEP86, TIC55, TIC110/IEP110 and CLPC. Mostly expressed in young leaves, also present in old leaves, roots and stems (at protein level).

Its subcellular location is the plastid. The protein resides in the chloroplast outer membrane. Mediates the insertion of proteins targeted to the outer membrane of chloroplasts. Required for the import of protein precursors into chloroplasts. Forms the voltage-dependent preprotein translocation channels (hydrophilic beta barrel) of the TOC complex in the chloroplastic outer membrane. The narrowest inner diameter of this channel is approximately 14 Angstroms. This Pisum sativum (Garden pea) protein is Protein TOC75, chloroplastic (TOC75).